A 379-amino-acid polypeptide reads, in one-letter code: Salicylate/benzoate carboxyl methyltransferase (379 aa).

Tyrosine 40 serves as a coordination point for S-adenosyl-L-homocysteine. Glutamine 47 is a salicylate binding site. 6 residues coordinate S-adenosyl-L-homocysteine: cysteine 82, asparagine 87, aspartate 119, leucine 120, serine 155, and phenylalanine 156. Histidine 176 and tryptophan 177 together coordinate salicylate. Mg(2+)-binding residues include asparagine 188, aspartate 275, phenylalanine 277, and asparagine 278.

Belongs to the methyltransferase superfamily. Type-7 methyltransferase family. SABATH subfamily. In terms of assembly, homodimer. Mg(2+) is required as a cofactor. As to expression, expressed in flowers and at lower levels in leaves and stems. Hardly detected in roots and siliques. Expressed in the sepals and the leaf trichomes and hydathodes.

It carries out the reaction benzoate + S-adenosyl-L-methionine = methyl benzoate + S-adenosyl-L-homocysteine. It catalyses the reaction salicylate + S-adenosyl-L-methionine = methyl salicylate + S-adenosyl-L-homocysteine. Methyltransferase involved in the biosynthesis of methylsalicylate in response to stresses. Utilizes salicylic acid (SA) more efficiently than benzoic acid (BA). Can also use anthranilic acid and m-hydroxybenzoic acid as substrate. This Arabidopsis thaliana (Mouse-ear cress) protein is Salicylate/benzoate carboxyl methyltransferase (BSMT1).